A 331-amino-acid chain; its full sequence is Meiotic recombination protein P22 (331 aa).

Positions 132–187 are disordered; the sequence is NNIQKEVHQRNSQRRSIQCTPKKRGRKPKQPAKKLQSRISTDQLGSTPSPSKLPAK. The span at 152 to 167 shows a compositional bias: basic residues; it reads PKKRGRKPKQPAKKLQ. The span at 168–181 shows a compositional bias: polar residues; the sequence is SRISTDQLGSTPSP.

The protein belongs to the TOP6B-like family.

The protein resides in the chromosome. In terms of biological role, required for formation of the mei-W68-mediated double-strand breaks (DSBs) that initiate meiotic recombination. This is Meiotic recombination protein P22 from Drosophila melanogaster (Fruit fly).